The chain runs to 144 residues: 3-dehydroquinate dehydratase (144 aa).

The active-site Proton acceptor is Tyr22. Residues Asn73, His79, and Asp86 each coordinate substrate. His99 acts as the Proton donor in catalysis. Substrate is bound by residues 100-101 (LS) and Arg110.

Belongs to the type-II 3-dehydroquinase family. In terms of assembly, homododecamer.

It carries out the reaction 3-dehydroquinate = 3-dehydroshikimate + H2O. The protein operates within metabolic intermediate biosynthesis; chorismate biosynthesis; chorismate from D-erythrose 4-phosphate and phosphoenolpyruvate: step 3/7. In terms of biological role, catalyzes a trans-dehydration via an enolate intermediate. The chain is 3-dehydroquinate dehydratase from Herpetosiphon aurantiacus (strain ATCC 23779 / DSM 785 / 114-95).